Reading from the N-terminus, the 784-residue chain is N-alpha-acetyltransferase 35, NatC auxiliary subunit homolog (784 aa).

Disordered stretches follow at residues 1–23 (MYPS…VAEP), 320–353 (NTLD…PPAF), and 606–630 (SKTQ…NKKT). A compositionally biased stretch (basic residues) spans 617–630 (KNRKAAKPKKNKKT).

Belongs to the MAK10 family. Component of the N-terminal acetyltransferase C (NatC) complex, which is composed of Naa35, Sbat/Naa38 and Naa30A.

It is found in the cytoplasm. Functionally, auxillary component of the N-terminal acetyltransferase C (NatC) complex which catalyzes acetylation of N-terminal methionine residues. This Drosophila melanogaster (Fruit fly) protein is N-alpha-acetyltransferase 35, NatC auxiliary subunit homolog.